A 450-amino-acid chain; its full sequence is Tubulin alpha chain (450 aa).

Positions 11, 71, 140, 144, 145, 179, 206, and 228 each coordinate GTP. Residue glutamate 71 participates in Mg(2+) binding. The active site involves glutamate 254.

It belongs to the tubulin family. In terms of assembly, dimer of alpha and beta chains. A typical microtubule is a hollow water-filled tube with an outer diameter of 25 nm and an inner diameter of 15 nM. Alpha-beta heterodimers associate head-to-tail to form protofilaments running lengthwise along the microtubule wall with the beta-tubulin subunit facing the microtubule plus end conferring a structural polarity. Microtubules usually have 13 protofilaments but different protofilament numbers can be found in some organisms and specialized cells. Mg(2+) serves as cofactor.

It is found in the cytoplasm. Its subcellular location is the cytoskeleton. It catalyses the reaction GTP + H2O = GDP + phosphate + H(+). In terms of biological role, tubulin is the major constituent of microtubules, a cylinder consisting of laterally associated linear protofilaments composed of alpha- and beta-tubulin heterodimers. Microtubules grow by the addition of GTP-tubulin dimers to the microtubule end, where a stabilizing cap forms. Below the cap, tubulin dimers are in GDP-bound state, owing to GTPase activity of alpha-tubulin. The polypeptide is Tubulin alpha chain (Zymoseptoria tritici (Speckled leaf blotch fungus)).